The chain runs to 45 residues: MSKRTYQPNKRKRLKTHGFRSRMSTASGRRIISCRRRKNRETLTA.

The span at 1-20 shows a compositional bias: basic residues; the sequence is MSKRTYQPNKRKRLKTHGFR. Positions 1–45 are disordered; the sequence is MSKRTYQPNKRKRLKTHGFRSRMSTASGRRIISCRRRKNRETLTA.

This sequence belongs to the bacterial ribosomal protein bL34 family.

The protein is Large ribosomal subunit protein bL34 of Tropheryma whipplei (strain Twist) (Whipple's bacillus).